Here is a 277-residue protein sequence, read N- to C-terminus: Diaminopimelate epimerase (277 aa).

Positions 13, 46, and 66 each coordinate substrate. Cys-75 (proton donor) is an active-site residue. Substrate is bound by residues 76–77 (GN), Asn-159, Asn-192, and 210–211 (ER). The Proton acceptor role is filled by Cys-219. 220-221 (GT) contacts substrate.

This sequence belongs to the diaminopimelate epimerase family. In terms of assembly, homodimer.

The protein resides in the cytoplasm. The enzyme catalyses (2S,6S)-2,6-diaminopimelate = meso-2,6-diaminopimelate. It functions in the pathway amino-acid biosynthesis; L-lysine biosynthesis via DAP pathway; DL-2,6-diaminopimelate from LL-2,6-diaminopimelate: step 1/1. In terms of biological role, catalyzes the stereoinversion of LL-2,6-diaminopimelate (L,L-DAP) to meso-diaminopimelate (meso-DAP), a precursor of L-lysine and an essential component of the bacterial peptidoglycan. The protein is Diaminopimelate epimerase of Azoarcus sp. (strain BH72).